The chain runs to 443 residues: Carbohydrate sulfotransferase 9 (443 aa).

The Cytoplasmic segment spans residues 1–12 (MQPSEMVMNPKQ). The helical; Signal-anchor for type II membrane protein transmembrane segment at 13 to 33 (VFLSVLIFGVAGLLLFMYLQV) threads the bilayer. The Lumenal portion of the chain corresponds to 34 to 443 (WIEEQHTGRV…LMFNYTTPFL (410 aa)). Polar residues predominate over residues 108–128 (LTKTSHSQGGDQALSKSTGSP). Positions 108–132 (LTKTSHSQGGDQALSKSTGSPTEKL) are disordered. Asn-159 carries an N-linked (GlcNAc...) asparagine glycan. Position 220–226 (220–226 (PKAGCSN)) interacts with 3'-phosphoadenylyl sulfate. Asn-243 carries N-linked (GlcNAc...) asparagine glycosylation. 280-288 (RDPMERLVS) lines the 3'-phosphoadenylyl sulfate pocket. N-linked (GlcNAc...) asparagine glycans are attached at residues Asn-324 and Asn-437.

It belongs to the sulfotransferase 2 family. In terms of tissue distribution, highly expressed in trachea. Also expressed in fetal lung, adult pancreas, testis and salivary gland. Expressed at low level in pituitary gland, apex of the heart, adult lung, prostate and mammary gland. Weakly or not expressed in heart, liver and spinal cord.

The protein localises to the golgi apparatus membrane. Its subcellular location is the secreted. Its function is as follows. Catalyzes the transfer of sulfate to position 4 of non-reducing N-acetylgalactosamine (GalNAc) residues in both N-glycans and O-glycans. Participates in biosynthesis of glycoprotein hormones lutropin and thyrotropin, by mediating sulfation of their carbohydrate structures. Has a higher activity toward carbonic anhydrase VI than toward lutropin. Only active against terminal GalNAcbeta1,GalNAcbeta. Isoform 2, but not isoform 1, is active toward chondroitin. This chain is Carbohydrate sulfotransferase 9 (CHST9), found in Homo sapiens (Human).